The chain runs to 122 residues: Large ribosomal subunit protein uL14 (122 aa).

The protein belongs to the universal ribosomal protein uL14 family. As to quaternary structure, part of the 50S ribosomal subunit. Forms a cluster with proteins L3 and L19. In the 70S ribosome, L14 and L19 interact and together make contacts with the 16S rRNA in bridges B5 and B8.

Its function is as follows. Binds to 23S rRNA. Forms part of two intersubunit bridges in the 70S ribosome. This Micrococcus luteus (Micrococcus lysodeikticus) protein is Large ribosomal subunit protein uL14.